The following is a 315-amino-acid chain: Glycine--tRNA ligase alpha subunit (315 aa).

Belongs to the class-II aminoacyl-tRNA synthetase family. In terms of assembly, tetramer of two alpha and two beta subunits.

It is found in the cytoplasm. It catalyses the reaction tRNA(Gly) + glycine + ATP = glycyl-tRNA(Gly) + AMP + diphosphate. The chain is Glycine--tRNA ligase alpha subunit from Pseudomonas aeruginosa (strain LESB58).